Here is a 164-residue protein sequence, read N- to C-terminus: Phosphopantetheine adenylyltransferase (164 aa).

Ser-10 contacts substrate. Residues 10 to 11 (SF) and His-18 contribute to the ATP site. Substrate contacts are provided by Lys-42, Leu-74, and Arg-88. ATP contacts are provided by residues 89-91 (GLR), Glu-99, and 124-130 (YSFLSSS).

The protein belongs to the bacterial CoaD family. As to quaternary structure, homohexamer. Mg(2+) is required as a cofactor.

Its subcellular location is the cytoplasm. It carries out the reaction (R)-4'-phosphopantetheine + ATP + H(+) = 3'-dephospho-CoA + diphosphate. It functions in the pathway cofactor biosynthesis; coenzyme A biosynthesis; CoA from (R)-pantothenate: step 4/5. Functionally, reversibly transfers an adenylyl group from ATP to 4'-phosphopantetheine, yielding dephospho-CoA (dPCoA) and pyrophosphate. In Exiguobacterium sp. (strain ATCC BAA-1283 / AT1b), this protein is Phosphopantetheine adenylyltransferase.